A 255-amino-acid polypeptide reads, in one-letter code: Pyrroloquinoline-quinone synthase (255 aa).

Belongs to the PqqC family.

The enzyme catalyses 6-(2-amino-2-carboxyethyl)-7,8-dioxo-1,2,3,4,7,8-hexahydroquinoline-2,4-dicarboxylate + 3 O2 = pyrroloquinoline quinone + 2 H2O2 + 2 H2O + H(+). The protein operates within cofactor biosynthesis; pyrroloquinoline quinone biosynthesis. Functionally, ring cyclization and eight-electron oxidation of 3a-(2-amino-2-carboxyethyl)-4,5-dioxo-4,5,6,7,8,9-hexahydroquinoline-7,9-dicarboxylic-acid to PQQ. This chain is Pyrroloquinoline-quinone synthase, found in Cereibacter sphaeroides (strain ATCC 17023 / DSM 158 / JCM 6121 / CCUG 31486 / LMG 2827 / NBRC 12203 / NCIMB 8253 / ATH 2.4.1.) (Rhodobacter sphaeroides).